The chain runs to 622 residues: Palmitoyltransferase ZDHHC13 (622 aa).

Met1 bears the N-acetylmethionine mark. The Cytoplasmic segment spans residues 1–291 (MEGPGLGSQC…RLWRWLHKCE (291 aa)). 7 ANK repeats span residues 43–78 (PLIEDSSNCDIVKATQYGIFERCKELVEAGYDVRQP), 81–110 (ENVSLLHWAAINNRLELVKFYISKGAVIDQ), 115–144 (LNSTPLHWAIRQGHLPMVILLLQHGADPTL), 148–177 (EGFSSIHLAVLFQHMPIIAYLISKGQSVNM), 181–211 (NGQTPLMLSAYKVIGPEPTGFLLKFNPSLSV), 216–245 (HQNTPLHWAVAAGNVSAVDKLLEAGSSLDI), and 249–277 (KGETPLDMALQSKNQLISHMLRTEAKMRA). The chain crosses the membrane as a helical span at residues 292-312 (LFLLLILSMITLWAVGYILDF). At 313–320 (NSDSWLLK) the chain is on the lumenal side. Residues 321–341 (GCLLVALFFLTSLFPRFLVGY) traverse the membrane as a helical segment. The Cytoplasmic portion of the chain corresponds to 342–347 (KNLVYL). Residues 348-368 (PTVFLLSSIFWIFMTWFILFF) traverse the membrane as a helical segment. Residues 369–371 (PDT) lie on the Lumenal side of the membrane. The chain crosses the membrane as a helical span at residues 372–392 (AGSPLYFAFIFSIMAFLYFFY). The Cytoplasmic segment spans residues 393-470 (KTWATDPGFT…RCIGFGNHHH (78 aa)). One can recognise a DHHC domain in the interval 426-476 (TFCTSCLIRKPLRSLHCHVCNSCVARFDQHCFWTGRCIGFGNHHHYIFFLL). Residue Cys456 is the S-palmitoyl cysteine intermediate of the active site. Residues 471–491 (YIFFLLSLSMVCDWIIYGSFV) traverse the membrane as a helical segment. Topologically, residues 492-518 (YWSNHCATTFKEDGLWTYLNQIVACSP) are lumenal. Residues 519 to 539 (WVLYIFMLAAFHFSWSTFLLI) form a helical membrane-spanning segment. The Cytoplasmic portion of the chain corresponds to 540-622 (NQLFQIAFLG…PAKEKVLRSV (83 aa)).

The protein belongs to the DHHC palmitoyltransferase family. AKR/ZDHHC17 subfamily. As to quaternary structure, interacts (via ANK repeats) with CLIP3. Interacts (via ANK repeats) with DNAJC5 (via C-terminus). Interacts (via ANK repeats) with HTT. Interacts (via ANK repeats) with MAP6. Interacts (via ANK repeats) with SNAP23. Interacts (via ANK repeats) with SNAP25. May interact (via ANK repeats) with SPRED2. As to expression, expressed in most adult tissues, but at low levels in the liver, skin, and lung.

The protein resides in the golgi apparatus membrane. It localises to the cytoplasmic vesicle membrane. The enzyme catalyses L-cysteinyl-[protein] + hexadecanoyl-CoA = S-hexadecanoyl-L-cysteinyl-[protein] + CoA. Palmitoyltransferase that could catalyze the addition of palmitate onto various protein substrates. Palmitoyltransferase for HTT and GAD2. May play a role in Mg(2+) transport. The protein is Palmitoyltransferase ZDHHC13 of Mus musculus (Mouse).